Reading from the N-terminus, the 235-residue chain is Sugar fermentation stimulation protein homolog (235 aa).

The protein belongs to the SfsA family.

The chain is Sugar fermentation stimulation protein homolog from Bartonella henselae (strain ATCC 49882 / DSM 28221 / CCUG 30454 / Houston 1) (Rochalimaea henselae).